We begin with the raw amino-acid sequence, 326 residues long: MEMO1 family protein TTHA0924 (326 aa).

The protein belongs to the MEMO1 family.

The sequence is that of MEMO1 family protein TTHA0924 from Thermus thermophilus (strain ATCC 27634 / DSM 579 / HB8).